A 177-amino-acid polypeptide reads, in one-letter code: Protein C (177 aa).

The span at 1–10 (MSTKAWNASR) shows a compositional bias: polar residues. A disordered region spans residues 1–37 (MSTKAWNASRLSGPDPSTPWSLKKPLQHGSRPPKGKR).

The protein belongs to the morbillivirus protein C family.

This chain is Protein C (P/V/C), found in Bos indicus (Zebu).